The sequence spans 370 residues: Histidinol-phosphate aminotransferase (370 aa).

The residue at position 223 (K223) is an N6-(pyridoxal phosphate)lysine.

This sequence belongs to the class-II pyridoxal-phosphate-dependent aminotransferase family. Histidinol-phosphate aminotransferase subfamily. Homodimer. Requires pyridoxal 5'-phosphate as cofactor.

The catalysed reaction is L-histidinol phosphate + 2-oxoglutarate = 3-(imidazol-4-yl)-2-oxopropyl phosphate + L-glutamate. It participates in amino-acid biosynthesis; L-histidine biosynthesis; L-histidine from 5-phospho-alpha-D-ribose 1-diphosphate: step 7/9. The protein is Histidinol-phosphate aminotransferase of Methylobacterium nodulans (strain LMG 21967 / CNCM I-2342 / ORS 2060).